A 554-amino-acid polypeptide reads, in one-letter code: Sesquiterpene synthase 14b (554 aa).

Positions 305, 309, 449, and 457 each coordinate Mg(2+). A DDXXD motif motif is present at residues 305 to 309 (DDLYD).

Belongs to the terpene synthase family. Tpsa subfamily. It depends on Mg(2+) as a cofactor. Mn(2+) is required as a cofactor.

It catalyses the reaction (2E,6E)-farnesyl diphosphate = (E)-gamma-bisabolene + diphosphate. The enzyme catalyses (2Z,6Z)-farnesyl diphosphate = (E)-gamma-bisabolene + diphosphate. The catalysed reaction is (2Z,6Z)-farnesyl diphosphate = (E)-alpha-bisabolene + diphosphate. It carries out the reaction (2Z,6Z)-farnesyl diphosphate = (Z)-beta-farnesene + diphosphate. It catalyses the reaction (2E,6E)-farnesyl diphosphate = (E)-beta-farnesene + diphosphate. The enzyme catalyses (2E,6E)-farnesyl diphosphate = (+)-thujopsene + diphosphate. The catalysed reaction is (2Z,6Z)-farnesyl diphosphate = (E)-beta-farnesene + diphosphate. It carries out the reaction (2E,6E)-farnesyl diphosphate = (Z)-beta-farnesene + diphosphate. It catalyses the reaction (2Z,6Z)-farnesyl diphosphate = beta-acoradiene + diphosphate. The enzyme catalyses (2Z,6Z)-farnesyl diphosphate = alpha-acoradiene + diphosphate. The catalysed reaction is (2Z,6Z)-farnesyl diphosphate = beta-bisabolene + diphosphate. It carries out the reaction (2E,6E)-farnesyl diphosphate = (-)-alpha-cedrene + diphosphate. It catalyses the reaction (2E,6E)-farnesyl diphosphate = beta-bisabolene + diphosphate. The enzyme catalyses (2E,6E)-farnesyl diphosphate = beta-acoradiene + diphosphate. The catalysed reaction is (2Z,6Z)-farnesyl diphosphate = (-)-alpha-cedrene + diphosphate. It carries out the reaction (2E)-geranyl diphosphate = terpinolene + diphosphate. It catalyses the reaction (2E)-geranyl diphosphate = limonene + diphosphate. The enzyme catalyses (2E)-geranyl diphosphate = beta-myrcene + diphosphate. The protein operates within secondary metabolite biosynthesis; terpenoid biosynthesis. Its function is as follows. Sesquiterpene synthase involved in the biosynthesis of volatile compounds. Mediates the conversion of (2E,6E)-farnesyl diphosphate ((EE)-FPP) into (+)-thujopsene, beta-bisabolene, alpha-cederene, beta-acoradiene, (E)-gamma-bisabolene, (Z)-alpha-bisabolene, (Z)-beta-farnesene and (E)-beta-farnesene, and of (2Z,6Z)-farnesyl diphosphate ((ZZ)-FPP) into (E)-gamma-bisabolene, (E)-alpha-bisabolene, (E)-beta-farnesene, (Z)-beta-farnesene, beta-bisabolene, beta-acoradiene and alpha-acoradiene. Can act with a low efficiency as a monoterpene synthase with geranyl diphosphate (GPP) as substrate, thus producing beta-myrcene, limonene and terpinolene. The protein is Sesquiterpene synthase 14b of Solanum habrochaites (Wild tomato).